Here is a 67-residue protein sequence, read N- to C-terminus: Large ribosomal subunit protein bL35 (67 aa).

The protein belongs to the bacterial ribosomal protein bL35 family.

The polypeptide is Large ribosomal subunit protein bL35 (Acidovorax ebreus (strain TPSY) (Diaphorobacter sp. (strain TPSY))).